The following is a 485-amino-acid chain: Pre-glycoprotein polyprotein GP complex (485 aa).

The N-myristoyl glycine; by host moiety is linked to residue Gly-2. The Extracellular portion of the chain corresponds to 2-17 (GQLISFFGEIPTILQE). Residues 18-33 (ALNIALIAVSIIATIK) traverse the membrane as a helical segment. Residues 34–58 (GVVNVWKSGLIQLLMFVMLAGRSCS) are Cytoplasmic-facing. Cys-57 is a binding site for Zn(2+). Residues 59–424 (VQIGHHLELE…QGRTPLSLVD (366 aa)) are Extracellular-facing. Disulfide bonds link Cys-85-Cys-225, Cys-271-Cys-284, Cys-293-Cys-302, and Cys-356-Cys-377. N-linked (GlcNAc...) asparagine; by host glycosylation is found at Asn-88, Asn-128, Asn-179, and Asn-218. N-linked (GlcNAc...) asparagine; by host glycosylation is found at Asn-357, Asn-365, Asn-382, and Asn-387. The chain crosses the membrane as a helical span at residues 425-445 (VCFWSTLFYTASIFLHLIRIP). Topologically, residues 446-485 (THRHIVGEGCPKPHRLRADSTCACGLYKQKRRPLKWVRSN) are cytoplasmic. Residues His-447, His-449, Cys-455, His-459, Cys-467, and Cys-469 each contribute to the Zn(2+) site.

The protein belongs to the arenaviridae GPC protein family. As to quaternary structure, interacts with glycoprotein G2. Part of the GP complex (GP-C) together with glycoprotein G1 and glycoprotein G2. The GP-complex interacts with protein Z, which interacts with ribonucleocapsid; these interactions may induce virion budding. In terms of assembly, homotrimer; disulfide-linked. In pre-fusion state, G1 homotrimers bind G2 homotrimers via ionic interactions. Part of the GP complex (GP-C) together with glycoprotein G2 and the stable signal peptide. The GP-complex interacts with protein Z, which interacts with ribonucleocapsid; these interactions may induce virion budding. Homotrimer. Interacts with the stable signal peptide. In pre-fusion state, G2 homotrimers bind G1 homotrimers via ionic interactions. Part of the GP complex (GP-C) together with glycoprotein G1 and the stable signal peptide. Acidification in the endosome triggers rearrangements, which ultimately leads to a 6 helix bundle formed by the two heptad repeat domains (HR1 and HR2) in post-fusion state. The GP-complex interacts with protein Z, which interacts with ribonucleocapsid; these interactions may induce virion budding. Post-translationally, specific enzymatic cleavages in vivo yield mature proteins. GP-C polyprotein is cleaved in the endoplasmic reticulum by the host protease MBTPS1. Only cleaved glycoprotein is incorporated into virions. The SSP remains stably associated with the GP complex following cleavage by signal peptidase and plays crucial roles in the trafficking of GP through the secretory pathway. In terms of processing, myristoylation is necessary for GP2-mediated fusion activity.

The protein localises to the virion membrane. It localises to the host endoplasmic reticulum membrane. It is found in the host Golgi apparatus membrane. Its subcellular location is the host cell membrane. Functions as a cleaved signal peptide that is retained as the third component of the GP complex (GP-C). Helps to stabilize the spike complex in its native conformation. The SSP is required for efficient glycoprotein expression, post-translational maturation cleavage of G1 and G2, glycoprotein transport to the cell surface plasma membrane, formation of infectious virus particles, and acid pH-dependent glycoprotein-mediated cell fusion. Its function is as follows. Forms the virion spikes together with glycoprotein G2. The glycoprotein spike trimers are connected to the underlying matrix. Interacts with the host receptor leading to virus endocytosis. In terms of biological role, forms the virion spikes together with glycoprotein G1. The glycoprotein spike trimers are connected to the underlying matrix. Class I viral fusion protein that directs fusion of viral and host endosomal membranes, leading to delivery of the nucleocapsid into the cytoplasm. Membrane fusion is mediated by irreversible conformational changes induced by acidification. The protein is Pre-glycoprotein polyprotein GP complex of Sigmodon hispidus (Hispid cotton rat).